The following is a 277-amino-acid chain: Large ribosomal subunit protein uL15c (277 aa).

The N-terminal 67 residues, 1–67, are a transit peptide targeting the chloroplast; it reads MATPLSISSN…FARPLVVVSQ (67 aa). Thr68 bears the N-acetylthreonine mark. The disordered stretch occupies residues 81–125; that stretch reads FRLDNLGPQPGSRKKQKRKGRGISAGQGASCGFGMRGQKSRSGPG. The segment covering 92–101 has biased composition (basic residues); that stretch reads SRKKQKRKGR. The segment covering 103 to 115 has biased composition (gly residues); that stretch reads ISAGQGASCGFGM.

The protein belongs to the universal ribosomal protein uL15 family. Part of the 50S ribosomal subunit.

The protein localises to the plastid. It is found in the chloroplast. The chain is Large ribosomal subunit protein uL15c (RPL15) from Arabidopsis thaliana (Mouse-ear cress).